Consider the following 306-residue polypeptide: Cathepsin Z (306 aa).

Residues methionine 1 to glycine 20 form the signal peptide. The propeptide at lysine 21–aspartate 65 is activation peptide. 5 cysteine pairs are disulfide-bonded: cysteine 39–cysteine 96, cysteine 93–cysteine 136, cysteine 130–cysteine 168, cysteine 158–cysteine 174, and cysteine 177–cysteine 182. The active site involves cysteine 96. Asparagine 187 carries N-linked (GlcNAc...) asparagine glycosylation. Cysteine 217 and cysteine 299 are disulfide-bonded. Residues histidine 243 and asparagine 265 contribute to the active site. Asparagine 286 is a glycosylation site (N-linked (GlcNAc...) asparagine).

It belongs to the peptidase C1 family.

The protein resides in the cytoplasmic vesicle. It localises to the secretory vesicle. It is found in the secreted. The enzyme catalyses Release of C-terminal amino acid residues with broad specificity, but lacks action on C-terminal proline. Shows weak endopeptidase activity.. The disulfide bridge formed between Cys-39 in the propeptide and the active site residue Cys-96 may prevent activation of the zymogen through formation of a reversible covalent bond with the active site residue. In terms of biological role, exhibits carboxy-monopeptidase as well as carboxy-dipeptidase activity. Plays an essential role in molting, a process during larval stages in which a new cuticle is formed and the old cuticle is shed. Required for the degradation and shedding of the old cuticle. This is Cathepsin Z from Onchocerca volvulus.